The following is a 176-amino-acid chain: MKQRGVTIWLTGLSGAGKSTITEALAQKLREQDYPLEVLDGDVVRTNLTKGLGFSKEDRDENIRRIGFVCNLLTRHGVFVLVSAISPYREIREEVRGKIGDFVEVFVNAPLAVCEQRDVKGLYKRARAGEIKSFTGIDDPYEPPLNPEVECRTDLEELDESVNKILHKLDQLGYLR.

12–19 (GLSGAGKS) is an ATP binding site. S86 functions as the Phosphoserine intermediate in the catalytic mechanism.

Belongs to the APS kinase family.

It catalyses the reaction adenosine 5'-phosphosulfate + ATP = 3'-phosphoadenylyl sulfate + ADP + H(+). Its pathway is sulfur metabolism; hydrogen sulfide biosynthesis; sulfite from sulfate: step 2/3. In terms of biological role, catalyzes the synthesis of activated sulfate. This chain is Adenylyl-sulfate kinase, found in Gloeothece citriformis (strain PCC 7424) (Cyanothece sp. (strain PCC 7424)).